Here is a 495-residue protein sequence, read N- to C-terminus: MTLATSSANGAWEAVIGLETHVQLGTNSKIFTCASTTFGDDPNTHIDPVVCGLPGTLPVLNQMVLEYAVKAAMALNLNIAEHSKFDRKQYFYPDLPKNYQISQFDEPIAEEGWIEVEVAEKGKDTYLKRIGIERLHMEEDAGKLVHAGSDRLAGSTHSLVDYNRAGVALAEIVSKPDLRTGREAAEYASEIRRIMRYLGVSDGNMQEGSLRCDVNISVRQGADAPFGTKVEIKNMNSFSAIQKACEYEIQRQIKVYEAGEAVVQETRLWDEGKQLTKSMRSKEGSSDYRYFPDPDLGPIEVMASVREGWRDELPELPAAKRHRYAEEFGLSVYDARVLTDEYPMAEYFEAAVAAGAEAKGVANWIQGDLAAYVNANRISYSTLPFRPEQLAEMVQLIDGGKISGKIAKEILPELLEKGGSPEAIVDQRGLGMISDPAAITTIVEELLAVHPQEVEAFRGGKTKLQSFFVGQLMKKTGGKADPKLANQILSKKLKG.

It belongs to the GatB/GatE family. GatB subfamily. As to quaternary structure, heterotrimer of A, B and C subunits.

It carries out the reaction L-glutamyl-tRNA(Gln) + L-glutamine + ATP + H2O = L-glutaminyl-tRNA(Gln) + L-glutamate + ADP + phosphate + H(+). It catalyses the reaction L-aspartyl-tRNA(Asn) + L-glutamine + ATP + H2O = L-asparaginyl-tRNA(Asn) + L-glutamate + ADP + phosphate + 2 H(+). In terms of biological role, allows the formation of correctly charged Asn-tRNA(Asn) or Gln-tRNA(Gln) through the transamidation of misacylated Asp-tRNA(Asn) or Glu-tRNA(Gln) in organisms which lack either or both of asparaginyl-tRNA or glutaminyl-tRNA synthetases. The reaction takes place in the presence of glutamine and ATP through an activated phospho-Asp-tRNA(Asn) or phospho-Glu-tRNA(Gln). This is Aspartyl/glutamyl-tRNA(Asn/Gln) amidotransferase subunit B from Prochlorococcus marinus (strain MIT 9313).